We begin with the raw amino-acid sequence, 71 residues long: Protein bdm (71 aa).

This chain is Protein bdm (bdm), found in Escherichia coli (strain K12).